Here is a 78-residue protein sequence, read N- to C-terminus: Acyl carrier protein (78 aa).

Residues 2-77 (DNIVERVKKI…QAVDYILAGK (76 aa)) enclose the Carrier domain. O-(pantetheine 4'-phosphoryl)serine is present on S37.

It belongs to the acyl carrier protein (ACP) family. 4'-phosphopantetheine is transferred from CoA to a specific serine of apo-ACP by AcpS. This modification is essential for activity because fatty acids are bound in thioester linkage to the sulfhydryl of the prosthetic group.

The protein resides in the cytoplasm. It participates in lipid metabolism; fatty acid biosynthesis. Functionally, carrier of the growing fatty acid chain in fatty acid biosynthesis. This chain is Acyl carrier protein, found in Dechloromonas aromatica (strain RCB).